The following is a 438-amino-acid chain: V-type ATP synthase beta chain (438 aa).

Belongs to the ATPase alpha/beta chains family.

In terms of biological role, produces ATP from ADP in the presence of a proton gradient across the membrane. The V-type beta chain is a regulatory subunit. In Protochlamydia amoebophila (strain UWE25), this protein is V-type ATP synthase beta chain.